Here is a 49-residue protein sequence, read N- to C-terminus: DNA-directed RNA polymerase subunit Rpo12 (49 aa).

Zn(2+) is bound by residues Cys-11, Cys-27, and Cys-30.

This sequence belongs to the archaeal Rpo12/eukaryotic RPC10 RNA polymerase subunit family. In terms of assembly, part of the RNA polymerase complex. It depends on Zn(2+) as a cofactor.

It is found in the cytoplasm. The enzyme catalyses RNA(n) + a ribonucleoside 5'-triphosphate = RNA(n+1) + diphosphate. In terms of biological role, DNA-dependent RNA polymerase (RNAP) catalyzes the transcription of DNA into RNA using the four ribonucleoside triphosphates as substrates. This Pyrococcus furiosus (strain ATCC 43587 / DSM 3638 / JCM 8422 / Vc1) protein is DNA-directed RNA polymerase subunit Rpo12.